Consider the following 206-residue polypeptide: Cell division protein SepF (206 aa).

Residues 31–53 are compositionally biased toward basic and acidic residues; sequence EEKERRKTERQEQRQAVKQEKRT. The segment at 31 to 81 is disordered; it reads EEKERRKTERQEQRQAVKQEKRTFPSQRPAFSEEAPTSSSSKLSAASGSSD. The span at 60-80 shows a compositional bias: low complexity; that stretch reads AFSEEAPTSSSSKLSAASGSS.

The protein belongs to the SepF family. Homodimer. Interacts with FtsZ.

It localises to the cytoplasm. Cell division protein that is part of the divisome complex and is recruited early to the Z-ring. Probably stimulates Z-ring formation, perhaps through the cross-linking of FtsZ protofilaments. Its function overlaps with FtsA. The polypeptide is Cell division protein SepF (Lachnoclostridium phytofermentans (strain ATCC 700394 / DSM 18823 / ISDg) (Clostridium phytofermentans)).